Consider the following 46-residue polypeptide: Escargot/snail protein homolog (46 aa).

3 C2H2-type zinc fingers span residues 1–4 (IRTH), 8–30 (CKCP…TTHH), and 36–46 (FSCQHCNRAFA).

This sequence belongs to the snail C2H2-type zinc-finger protein family.

It localises to the nucleus. This Oryzias latipes (Japanese rice fish) protein is Escargot/snail protein homolog.